Consider the following 244-residue polypeptide: 5-oxoprolinase subunit A (244 aa).

Belongs to the LamB/PxpA family. Forms a complex composed of PxpA, PxpB and PxpC.

It catalyses the reaction 5-oxo-L-proline + ATP + 2 H2O = L-glutamate + ADP + phosphate + H(+). Functionally, catalyzes the cleavage of 5-oxoproline to form L-glutamate coupled to the hydrolysis of ATP to ADP and inorganic phosphate. This Salmonella typhi protein is 5-oxoprolinase subunit A.